We begin with the raw amino-acid sequence, 426 residues long: Glucose-6-phosphate isomerase (426 aa).

Residue glutamate 282 is the Proton donor of the active site. Active-site residues include histidine 303 and lysine 417.

Belongs to the GPI family.

It is found in the cytoplasm. The enzyme catalyses alpha-D-glucose 6-phosphate = beta-D-fructose 6-phosphate. It functions in the pathway carbohydrate biosynthesis; gluconeogenesis. The protein operates within carbohydrate degradation; glycolysis; D-glyceraldehyde 3-phosphate and glycerone phosphate from D-glucose: step 2/4. Its function is as follows. Catalyzes the reversible isomerization of glucose-6-phosphate to fructose-6-phosphate. This is Glucose-6-phosphate isomerase from Aster yellows witches'-broom phytoplasma (strain AYWB).